Reading from the N-terminus, the 179-residue chain is Large ribosomal subunit protein uL5 (179 aa).

This sequence belongs to the universal ribosomal protein uL5 family. Part of the 50S ribosomal subunit; part of the 5S rRNA/L5/L18/L25 subcomplex. Contacts the 5S rRNA and the P site tRNA. Forms a bridge to the 30S subunit in the 70S ribosome.

Its function is as follows. This is one of the proteins that bind and probably mediate the attachment of the 5S RNA into the large ribosomal subunit, where it forms part of the central protuberance. In the 70S ribosome it contacts protein S13 of the 30S subunit (bridge B1b), connecting the 2 subunits; this bridge is implicated in subunit movement. Contacts the P site tRNA; the 5S rRNA and some of its associated proteins might help stabilize positioning of ribosome-bound tRNAs. The chain is Large ribosomal subunit protein uL5 from Thiobacillus denitrificans (strain ATCC 25259 / T1).